The sequence spans 191 residues: Pre-rRNA-processing protein TSR2 homolog (191 aa).

Positions 149-172 (TATNDGAATDGVCPQPEPSDPDAQ) are disordered.

Belongs to the TSR2 family.

In terms of biological role, may be involved in 20S pre-rRNA processing. This is Pre-rRNA-processing protein TSR2 homolog (TSR2) from Homo sapiens (Human).